The primary structure comprises 28 residues: Ranatuerin-2B (28 aa).

A disulfide bridge connects residues C23 and C28.

Expressed by the skin glands.

The protein localises to the secreted. Antibacterial activity against Gram-positive bacterium S.aureus and Gram-negative bacterium E.coli. Has activity against C.albicans. The chain is Ranatuerin-2B from Lithobates berlandieri (Rio Grande leopard frog).